The primary structure comprises 568 residues: Zinc finger protein 76 (568 aa).

Lys-24 participates in a covalent cross-link: Glycyl lysine isopeptide (Lys-Gly) (interchain with G-Cter in SUMO2). Tandem repeats lie at residues 34-45, 62-73, and 88-99. A 3 X 12 AA approximate repeats region spans residues 34–99; that stretch reads IQLEDGTTAY…LEDGSTAYIH (66 aa). 7 C2H2-type zinc fingers span residues 165 to 189, 195 to 219, 225 to 249, 255 to 279, 285 to 309, 315 to 339, and 345 to 368; these read FRCGYKGCGRLYTTAHHLKVHERAH, YRCDFPSCGKAFATGYGLKSHVRTH, YKCPEELCSKAFKTSGDLQKHVRTH, FRCPFEGCGRSFTTSNIRKVHVRTH, YTCPEPHCGRGFTSATNYKNHVRIH, YVCTVPGCGKRFTEYSSLYKHHVVH, and YTCSSCGKTYRQTSTLAMHKRSAH. A disordered region spans residues 365 to 402; it reads RSAHGELEATEESEQALYEQQQLEAASAAEESPPPKPT. Residues 379–395 show a composition bias toward low complexity; sequence QALYEQQQLEAASAAEE.

The protein belongs to the krueppel C2H2-type zinc-finger protein family.

The protein resides in the nucleus. Its function is as follows. May be involved in transcriptional regulation. The sequence is that of Zinc finger protein 76 (Znf76) from Mus musculus (Mouse).